A 258-amino-acid polypeptide reads, in one-letter code: Imidazole glycerol phosphate synthase subunit HisF (258 aa).

Active-site residues include Asp11 and Asp130.

It belongs to the HisA/HisF family. In terms of assembly, heterodimer of HisH and HisF.

It is found in the cytoplasm. It carries out the reaction 5-[(5-phospho-1-deoxy-D-ribulos-1-ylimino)methylamino]-1-(5-phospho-beta-D-ribosyl)imidazole-4-carboxamide + L-glutamine = D-erythro-1-(imidazol-4-yl)glycerol 3-phosphate + 5-amino-1-(5-phospho-beta-D-ribosyl)imidazole-4-carboxamide + L-glutamate + H(+). Its pathway is amino-acid biosynthesis; L-histidine biosynthesis; L-histidine from 5-phospho-alpha-D-ribose 1-diphosphate: step 5/9. IGPS catalyzes the conversion of PRFAR and glutamine to IGP, AICAR and glutamate. The HisF subunit catalyzes the cyclization activity that produces IGP and AICAR from PRFAR using the ammonia provided by the HisH subunit. In Xanthobacter autotrophicus (strain ATCC BAA-1158 / Py2), this protein is Imidazole glycerol phosphate synthase subunit HisF.